Here is a 91-residue protein sequence, read N- to C-terminus: Transcriptional repressor FrmR (91 aa).

It belongs to the FrmR/RcnR family. In terms of assembly, homotetramer.

Its subcellular location is the cytoplasm. Its function is as follows. Formaldehyde sensor. In the absence of formaldehyde, mediates repression of the frmRAB operon. Acts by binding directly to the frmRAB promoter region. In the presence of formaldehyde, it dissociates from the frmRAB promoter region and allows expression of the formaldehyde detoxification system encoded by frmA and frmB. This Escherichia coli (strain UTI89 / UPEC) protein is Transcriptional repressor FrmR.